Here is a 38-residue protein sequence, read N- to C-terminus: Large ribosomal subunit protein bL36 (38 aa).

Belongs to the bacterial ribosomal protein bL36 family.

The polypeptide is Large ribosomal subunit protein bL36 (Chloroflexus aurantiacus (strain ATCC 29366 / DSM 635 / J-10-fl)).